We begin with the raw amino-acid sequence, 340 residues long: Entry-fusion complex protein OPG094 (340 aa).

The interval 1–20 is disordered; the sequence is MGGGVSVELPKRDPPPGVPT. G2 carries the N-myristoyl glycine; by host lipid modification. The Virion surface portion of the chain corresponds to 2–319; sequence GGGVSVELPK…VQHNIKHSFD (318 aa). The helical; Signal-anchor for type II membrane protein transmembrane segment at 320–340 threads the bilayer; sequence LKLHLISLLSLLVIWILIVAI.

The protein belongs to the orthopoxvirus OPG086 family. As to quaternary structure, interacts with OPG143. Component of the entry fusion complex (EFC) composed of OPG053, OPG076, OPG086, OPG094, OPG095, OPG099, OPG107, OPG143, OPG104, OPG147 and OPG155. Except for OPG095 and OPG053, each of the EFC proteins is required for assembly or stability of the complex. Post-translationally, unglycosylated because produced in viral factories instead of the classic ER -Golgi route.

Its subcellular location is the virion membrane. In terms of biological role, component of the entry fusion complex (EFC), which consists of 11 proteins. During cell infection, this complex mediates entry of the virion core into the host cytoplasm by a two-step mechanism consisting of lipid mixing of the viral and cellular membranes and subsequent pore formation. The chain is Entry-fusion complex protein OPG094 (OPG094) from Variola virus.